The sequence spans 394 residues: Cystathionine gamma-lyase (394 aa).

The disordered stretch occupies residues 37–56; sequence KQSSPANPIGTYEYSRSQNP. Residues arginine 52, tyrosine 104, and arginine 109 each coordinate substrate. Lysine 204 carries the N6-(pyridoxal phosphate)lysine modification. Glutamate 334 contacts substrate. At serine 362 the chain carries Phosphoserine.

Belongs to the trans-sulfuration enzymes family. As to quaternary structure, homotetramer. It depends on pyridoxal 5'-phosphate as a cofactor.

The protein localises to the cytoplasm. The enzyme catalyses L,L-cystathionine + H2O = 2-oxobutanoate + L-cysteine + NH4(+). It functions in the pathway amino-acid biosynthesis; L-cysteine biosynthesis; L-cysteine from L-homocysteine and L-serine: step 2/2. Functionally, catalyzes the production of cysteine from cystathionine in the reverse transsulfuration pathway for the biosynthesis of sulfur-containing amino acids cysteine and methionine. In this pathway, homocysteine sulfur is converted to cysteine sulfur. Also has cystathionine beta-lyase and cystathionine gamma-synthase activities in vitro. Cystathionine beta-lyase may be physiological, while cystathionine gamma-synthase activity is not, as the required substrate O-succinyl-L-homoserine(OSH) does not occur naturally in S.cerevisiae. In Saccharomyces cerevisiae (strain ATCC 204508 / S288c) (Baker's yeast), this protein is Cystathionine gamma-lyase.